Consider the following 215-residue polypeptide: Protein transport protein sec22 (215 aa).

The Cytoplasmic segment spans residues 1–194 (MVKSTTVTRL…RVNLEALWRQ (194 aa)). The Longin domain maps to 9 to 118 (RLDGLPLAAS…YAFVQFDTFM (110 aa)). The v-SNARE coiled-coil homology domain maps to 133–193 (NLDKLNTELK…RRVNLEALWR (61 aa)). A helical; Anchor for type IV membrane protein membrane pass occupies residues 195-215 (YGPVSIIALLFLIFVYWRFFA).

The protein belongs to the synaptobrevin family. In terms of assembly, component of two distinct SNARE complexes consisting of sed5, bos1, bet1 and sec22 or ufe1, use1, sec20 and sec22. Ykt6 can probably replace sec22 as subunit of either complex.

It localises to the membrane. The protein localises to the endoplasmic reticulum membrane. The protein resides in the golgi apparatus membrane. Its function is as follows. Nonessential SNARE involved in targeting and fusion of ER-derived transport vesicles with the Golgi complex as well as Golgi-derived retrograde transport vesicles with the ER. The sequence is that of Protein transport protein sec22 (sec22) from Schizosaccharomyces pombe (strain 972 / ATCC 24843) (Fission yeast).